Here is a 102-residue protein sequence, read N- to C-terminus: NADH-quinone oxidoreductase subunit K (102 aa).

The next 3 helical transmembrane spans lie at 5-25, 31-51, and 66-86; these read LEHY…GIFL, IVIL…LVAF, and FVLT…VVFF.

This sequence belongs to the complex I subunit 4L family. NDH-1 is composed of 14 different subunits. Subunits NuoA, H, J, K, L, M, N constitute the membrane sector of the complex.

Its subcellular location is the cell inner membrane. The catalysed reaction is a quinone + NADH + 5 H(+)(in) = a quinol + NAD(+) + 4 H(+)(out). Functionally, NDH-1 shuttles electrons from NADH, via FMN and iron-sulfur (Fe-S) centers, to quinones in the respiratory chain. The immediate electron acceptor for the enzyme in this species is believed to be ubiquinone. Couples the redox reaction to proton translocation (for every two electrons transferred, four hydrogen ions are translocated across the cytoplasmic membrane), and thus conserves the redox energy in a proton gradient. The polypeptide is NADH-quinone oxidoreductase subunit K (Parvibaculum lavamentivorans (strain DS-1 / DSM 13023 / NCIMB 13966)).